The sequence spans 334 residues: MLDDRSKLLLKALVERYIAEGQPVGSRTLSRASGLELSPATIRNVMADLEDLGLIASPHTSAGRVPTAKGYRLFVDTMLTVQQEQLPTVQLMPEQPQKVIANAAHLLSSLSQFVGVVMAPRRASVFRHIEFLRLSEKRFLVIIVSPDGDVQNRVIFTEVDYSQSQLVEAANFLNANYAGLTMEQVRERLKLEVDKLRGEIAALMQAAVSVGSEAMSGSQDEVVFSGERNLLSVSDFSSNMSHLRRAFDLFEQKTQILRLLDISSRAEGVRIFIGGESQVVPFEELSVVSAPYEVDGQVVGTLGVIGPTRMSYDRMIQIVDITSKLVSNALSHRK.

Belongs to the HrcA family.

In terms of biological role, negative regulator of class I heat shock genes (grpE-dnaK-dnaJ and groELS operons). Prevents heat-shock induction of these operons. This chain is Heat-inducible transcription repressor HrcA, found in Acidovorax sp. (strain JS42).